A 616-amino-acid chain; its full sequence is Chaperone protein HscA homolog (616 aa).

It belongs to the heat shock protein 70 family.

Its function is as follows. Chaperone involved in the maturation of iron-sulfur cluster-containing proteins. Has a low intrinsic ATPase activity which is markedly stimulated by HscB. This Vibrio atlanticus (strain LGP32) (Vibrio splendidus (strain Mel32)) protein is Chaperone protein HscA homolog.